The sequence spans 421 residues: Testin (421 aa).

Residues Met-92–Asp-199 form the PET domain. The tract at residues Glu-133–Cys-164 is disordered. Basic and acidic residues predominate over residues Pro-155–Cys-164. 3 LIM zinc-binding domains span residues Tyr-234–Glu-297, Pro-299–Val-359, and Gln-362–Ser-421.

The protein belongs to the prickle / espinas / testin family. Interacts via LIM domain 1 with ZYX. Interacts (via LIM domain 3) with ENAH and VASP. Interacts with ALKBH4, talin, actin, alpha-actinin, GRIP1 and PXN. Interacts (via LIM domain 2) with ACTL7A (via N-terminus). Heterodimer with ACTL7A; the heterodimer interacts with ENAH to form a heterotrimer.

The protein resides in the cytoplasm. It localises to the cell junction. The protein localises to the focal adhesion. Scaffold protein that may play a role in cell adhesion, cell spreading and in the reorganization of the actin cytoskeleton. Plays a role in the regulation of cell proliferation. May act as a tumor suppressor. This Saimiri boliviensis boliviensis (Bolivian squirrel monkey) protein is Testin (TES).